The chain runs to 325 residues: Transaldolase (325 aa).

The active-site Schiff-base intermediate with substrate is Lys-125.

It belongs to the transaldolase family. Type 2 subfamily.

It localises to the cytoplasm. It carries out the reaction D-sedoheptulose 7-phosphate + D-glyceraldehyde 3-phosphate = D-erythrose 4-phosphate + beta-D-fructose 6-phosphate. The protein operates within carbohydrate degradation; pentose phosphate pathway; D-glyceraldehyde 3-phosphate and beta-D-fructose 6-phosphate from D-ribose 5-phosphate and D-xylulose 5-phosphate (non-oxidative stage): step 2/3. Functionally, transaldolase is important for the balance of metabolites in the pentose-phosphate pathway. This is Transaldolase from Campylobacter jejuni subsp. jejuni serotype O:23/36 (strain 81-176).